Consider the following 466-residue polypeptide: MSKTAIVEIFNSKFPIGTEVTVQGWIRTRRDSKAGISFLAIYDGSCFDPIQAVVPAALENYSDEVLNLTAGCSVQVTGELVESPGKGQQFEIQATQVEVLGFVQDPDTYPMSAKRHSIEYMREHAHLRARTNMFGAVTRVRNCLSHAMHNFFYEKGFNWISTPIITGSDAEGAGEMFRVSTLDLENLPRNDTGAIDYKKDFFGKETFLTVSGQLNAETYACALSKVYTFGPTFRAENSHTTRHLAEFWMVEPEIAFADLADAAQLAEDMLKYVFNAVLTERADDMAFFAQRVDKEAITRLEKIVSSEFVRMDYTDAIEILQNCGKEFEFPVAWGVDLQSEHERYLAEVHVGAPVILQNYPKDIKAFYMKLNADGKTVAAMDVLAPGIGEIIGGSQREEDLVALDKRFDEMGINKEDYSWYRDLRKYGTVPHAGFGLGFERLVSYVTGVQNIRDVIAFPRAPGSADF.

This sequence belongs to the class-II aminoacyl-tRNA synthetase family. As to quaternary structure, homodimer.

The protein localises to the cytoplasm. It catalyses the reaction tRNA(Asn) + L-asparagine + ATP = L-asparaginyl-tRNA(Asn) + AMP + diphosphate + H(+). This Psychromonas ingrahamii (strain DSM 17664 / CCUG 51855 / 37) protein is Asparagine--tRNA ligase.